Here is a 436-residue protein sequence, read N- to C-terminus: Serine hydroxymethyltransferase (436 aa).

Residues Leu-133 and 137-139 (GHI) contribute to the (6S)-5,6,7,8-tetrahydrofolate site. Lys-242 carries the N6-(pyridoxal phosphate)lysine modification.

This sequence belongs to the SHMT family. In terms of assembly, homodimer. Pyridoxal 5'-phosphate serves as cofactor.

The protein localises to the cytoplasm. The enzyme catalyses (6R)-5,10-methylene-5,6,7,8-tetrahydrofolate + glycine + H2O = (6S)-5,6,7,8-tetrahydrofolate + L-serine. It functions in the pathway one-carbon metabolism; tetrahydrofolate interconversion. It participates in amino-acid biosynthesis; glycine biosynthesis; glycine from L-serine: step 1/1. Functionally, catalyzes the reversible interconversion of serine and glycine with tetrahydrofolate (THF) serving as the one-carbon carrier. This reaction serves as the major source of one-carbon groups required for the biosynthesis of purines, thymidylate, methionine, and other important biomolecules. Also exhibits THF-independent aldolase activity toward beta-hydroxyamino acids, producing glycine and aldehydes, via a retro-aldol mechanism. The sequence is that of Serine hydroxymethyltransferase from Pelagibacter ubique (strain HTCC1062).